Here is a 167-residue protein sequence, read N- to C-terminus: Probable chemoreceptor glutamine deamidase CheD (167 aa).

The protein belongs to the CheD family.

The catalysed reaction is L-glutaminyl-[protein] + H2O = L-glutamyl-[protein] + NH4(+). Its function is as follows. Probably deamidates glutamine residues to glutamate on methyl-accepting chemotaxis receptors (MCPs), playing an important role in chemotaxis. The sequence is that of Probable chemoreceptor glutamine deamidase CheD from Natronomonas pharaonis (strain ATCC 35678 / DSM 2160 / CIP 103997 / JCM 8858 / NBRC 14720 / NCIMB 2260 / Gabara) (Halobacterium pharaonis).